A 238-amino-acid polypeptide reads, in one-letter code: MAEDLAKQLAGYKAQLQQVESALTANGENEDLLKLKKDLQEVIELTKDLLSSQPSETADDACDDMSASGSQSWKVGEKCMAVWSDDGQWYEAEIEEIDEENGTAAITFAGYGNAEVTSLLNLRPVEEGRKAKEDSGNLPMSKKEMIAAQREYKKKKALKKAQRIKELEQEREDQKVKWQQFNNKAYSKNKKGQVKRSIFASPESVTGKVGVGTCGIADKPMTQYQDTSKYNVRHLMPQ.

The Tudor domain maps to 72-132 (SWKVGEKCMA…RPVEEGRKAK (61 aa)). Residues 142–160 (KKEMIAAQREYKKKKALKK) carry the Nuclear localization signal motif.

This sequence belongs to the SMN family. In terms of assembly, associates with spliceosomes.

It is found in the nucleus speckle. Its subcellular location is the nucleus. It localises to the cajal body. In terms of biological role, involved in spliceosome assembly. The sequence is that of Survival of motor neuron-related-splicing factor 30 (smndc1) from Xenopus tropicalis (Western clawed frog).